A 741-amino-acid polypeptide reads, in one-letter code: Ethylene receptor (741 aa).

Helical transmembrane passes span 23–43, 53–73, and 92–112; these read ISDFFIALAYFSIPLELIYFV, WVLVQFGAFIVLCGATHLINL, and VLTAVVSCATALMLVHIIPDL. The Cu cation site is built by Cys-65 and His-69. Positions 158–307 constitute a GAF domain; it reads DRHTILKTTL…VVADQVAVAL (150 aa). The Histidine kinase domain maps to 350–589; the sequence is VMNHEMRTPM…TFIVKLGFPE (240 aa). His-353 is subject to Phosphohistidine; by autocatalysis. The Response regulatory domain occupies 615–732; sequence KVLVMDDNGV…KMRSVLSELL (118 aa). A 4-aspartylphosphate modification is found at Asp-663.

It belongs to the ethylene receptor family. In terms of assembly, homodimer; disulfide-linked. It depends on Cu cation as a cofactor. Post-translationally, activation probably requires a transfer of a phosphate group between a His in the transmitter domain and an Asp of the receiver domain.

It is found in the endoplasmic reticulum membrane. It catalyses the reaction ATP + protein L-histidine = ADP + protein N-phospho-L-histidine.. May act early in the ethylene signal transduction pathway, possibly as an ethylene receptor, or as a regulator of the pathway. The polypeptide is Ethylene receptor (ETR1) (Malus domestica (Apple)).